Here is a 95-residue protein sequence, read N- to C-terminus: UPF0223 protein Bsph_1378 (95 aa).

Belongs to the UPF0223 family.

The protein is UPF0223 protein Bsph_1378 of Lysinibacillus sphaericus (strain C3-41).